Reading from the N-terminus, the 707-residue chain is MARTVPLERVRNIGIAAHIDAGKTTTTERILFYSGLVHKIGEVHDGTAVTDWMAQERERGITITAAAITTRWTKRDPANPSQPLSGAPEYTINIIDTPGHVDFTIEVERSMRVLDGVIAVFDSVGGVQPQSETVWRQANRYNVPRIAFVNKMDRMGANFLKVYNQIRERLKANAVPIQLPIGAEDGFCGIVDLVRMQARIYMDEIGKDIRPAPIPEEMKDLVAEYRAKLVEAVAETDEALMEKYFAEEDLSEADLMAGLRKGTISGQIVPMLCGSAFKNKGVQMLLDAVVDYLPSPVDIPAIKGVLPDGSEVSRRASDDEPFSALAFKLMSDKYGDLTFIRVYSGVLTKGTYVLNSTKNKKERISRLVVLKADERLDVDELRAGDLGAVVGLKDTTTGDTLCDENAPVILESLFIPEPVISVAVEPKTKADIDKLSKALQALAKEDPTFRVSVDPETNQTIISGMGELHLEILVDRMLREFNVEANVGNPQVAYRETIRKPVSRVEGKFVRQSGGRGQYGHVVIDLEPAEPGTGFEFVSKIVGGVVPKEYIGPAEQGIREACESGVLAGYPLIDIRATLVDGSYHEVDSSEMAFKIAGSMALKEAARRASPTLLEPMMKVEVEVPEAFVGDVIGDINARRGQMEGMNTEGGITKVNAKVPLAEMFGYATDIRSKTQGRGTFTMEFSHYEEVPRSIAEAIIAKNKGNE.

A tr-type G domain is found at 8–297 (ERVRNIGIAA…AVVDYLPSPV (290 aa)). Residues 17-24 (AHIDAGKT), 96-100 (DTPGH), and 150-153 (NKMD) each bind GTP.

Belongs to the TRAFAC class translation factor GTPase superfamily. Classic translation factor GTPase family. EF-G/EF-2 subfamily.

The protein localises to the cytoplasm. In terms of biological role, catalyzes the GTP-dependent ribosomal translocation step during translation elongation. During this step, the ribosome changes from the pre-translocational (PRE) to the post-translocational (POST) state as the newly formed A-site-bound peptidyl-tRNA and P-site-bound deacylated tRNA move to the P and E sites, respectively. Catalyzes the coordinated movement of the two tRNA molecules, the mRNA and conformational changes in the ribosome. In Synechococcus sp. (strain JA-2-3B'a(2-13)) (Cyanobacteria bacterium Yellowstone B-Prime), this protein is Elongation factor G.